The primary structure comprises 329 residues: DNA-directed RNA polymerase subunit alpha (329 aa).

Residues 1-235 (MQGSVTEFLK…EQLDAFVDLR (235 aa)) are alpha N-terminal domain (alpha-NTD). An alpha C-terminal domain (alpha-CTD) region spans residues 249-329 (FDPILLRPVD…NWPPASIAED (81 aa)).

This sequence belongs to the RNA polymerase alpha chain family. In terms of assembly, homodimer. The RNAP catalytic core consists of 2 alpha, 1 beta, 1 beta' and 1 omega subunit. When a sigma factor is associated with the core the holoenzyme is formed, which can initiate transcription.

The enzyme catalyses RNA(n) + a ribonucleoside 5'-triphosphate = RNA(n+1) + diphosphate. Its function is as follows. DNA-dependent RNA polymerase catalyzes the transcription of DNA into RNA using the four ribonucleoside triphosphates as substrates. In Actinobacillus pleuropneumoniae serotype 5b (strain L20), this protein is DNA-directed RNA polymerase subunit alpha.